The sequence spans 150 residues: Large ribosomal subunit protein bL9 (150 aa).

The protein belongs to the bacterial ribosomal protein bL9 family.

Functionally, binds to the 23S rRNA. This is Large ribosomal subunit protein bL9 from Wolinella succinogenes (strain ATCC 29543 / DSM 1740 / CCUG 13145 / JCM 31913 / LMG 7466 / NCTC 11488 / FDC 602W) (Vibrio succinogenes).